The sequence spans 82 residues: Toxin NaTx-13 (82 aa).

Residues 6–70 enclose the LCN-type CS-alpha/beta domain; sequence PGGYPVNQFK…KNSIEVFSCG (65 aa). Intrachain disulfides connect C16–C69, C20–C44, C30–C49, and C34–C51.

This sequence belongs to the long (4 C-C) scorpion toxin superfamily. Sodium channel inhibitor family. In terms of tissue distribution, expressed by the venom gland.

The protein resides in the secreted. In terms of biological role, probable sodium channel inhibitor. This chain is Toxin NaTx-13, found in Centruroides sculpturatus (Arizona bark scorpion).